The following is a 143-amino-acid chain: Hemoglobin cathodic subunit alpha (143 aa).

Serine 1 carries the N-acetylserine modification. The Globin domain occupies 1–143; the sequence is SLAPGDKTVV…VCAALSDKYR (143 aa). Histidine 59 is a binding site for O2. Position 89 (histidine 89) interacts with heme b.

The protein belongs to the globin family. As to quaternary structure, heterotetramer of two alpha chains and two beta chains. Red blood cells.

In terms of biological role, involved in oxygen transport from gills to the various peripheral tissues. The chain is Hemoglobin cathodic subunit alpha from Gymnothorax unicolor (Brown moray).